We begin with the raw amino-acid sequence, 218 residues long: UPF0329 protein ECU10_1860 (218 aa).

The protein belongs to the UPF0329 family.

This chain is UPF0329 protein ECU10_1860, found in Encephalitozoon cuniculi (strain GB-M1) (Microsporidian parasite).